Consider the following 478-residue polypeptide: Protein nucleotidyltransferase YdiU (478 aa).

ATP is bound by residues glycine 84, glycine 86, arginine 87, lysine 107, aspartate 119, glycine 120, arginine 170, and arginine 177. Aspartate 246 functions as the Proton acceptor in the catalytic mechanism. Mg(2+) is bound by residues asparagine 247 and aspartate 256. Aspartate 256 lines the ATP pocket.

Belongs to the SELO family. The cofactor is Mg(2+). Requires Mn(2+) as cofactor.

It carries out the reaction L-seryl-[protein] + ATP = 3-O-(5'-adenylyl)-L-seryl-[protein] + diphosphate. It catalyses the reaction L-threonyl-[protein] + ATP = 3-O-(5'-adenylyl)-L-threonyl-[protein] + diphosphate. The catalysed reaction is L-tyrosyl-[protein] + ATP = O-(5'-adenylyl)-L-tyrosyl-[protein] + diphosphate. The enzyme catalyses L-histidyl-[protein] + UTP = N(tele)-(5'-uridylyl)-L-histidyl-[protein] + diphosphate. It carries out the reaction L-seryl-[protein] + UTP = O-(5'-uridylyl)-L-seryl-[protein] + diphosphate. It catalyses the reaction L-tyrosyl-[protein] + UTP = O-(5'-uridylyl)-L-tyrosyl-[protein] + diphosphate. Nucleotidyltransferase involved in the post-translational modification of proteins. It can catalyze the addition of adenosine monophosphate (AMP) or uridine monophosphate (UMP) to a protein, resulting in modifications known as AMPylation and UMPylation. This Shigella sonnei (strain Ss046) protein is Protein nucleotidyltransferase YdiU.